The primary structure comprises 212 residues: Redox-sensing transcriptional repressor Rex (212 aa).

Residues 17 to 56 (LYARSLRYLLEEGVHSVSSQELGERINVTAAQIRKDLSYF) constitute a DNA-binding region (H-T-H motif). Position 91-96 (91-96 (GIGLLG)) interacts with NAD(+).

It belongs to the transcriptional regulatory Rex family. Homodimer.

It localises to the cytoplasm. Functionally, modulates transcription in response to changes in cellular NADH/NAD(+) redox state. This chain is Redox-sensing transcriptional repressor Rex, found in Chloroflexus aurantiacus (strain ATCC 29366 / DSM 635 / J-10-fl).